The chain runs to 387 residues: Transcription termination/antitermination protein NusA (387 aa).

The S1 motif domain occupies 145–209 (GQVLTGVVTR…AKGPSLLVSR (65 aa)). The region spanning 312–379 (AKKARVKVTK…ARERKAREEF (68 aa)) is the KH domain.

This sequence belongs to the NusA family. As to quaternary structure, monomer. Binds directly to the core enzyme of the DNA-dependent RNA polymerase and to nascent RNA.

The protein localises to the cytoplasm. Functionally, participates in both transcription termination and antitermination. The polypeptide is Transcription termination/antitermination protein NusA (Thermus thermophilus (strain ATCC 27634 / DSM 579 / HB8)).